A 494-amino-acid polypeptide reads, in one-letter code: 3-octaprenyl-4-hydroxybenzoate carboxy-lyase (494 aa).

N172 is a binding site for Mn(2+). Prenylated FMN-binding positions include 175 to 177, 189 to 191, and 194 to 195; these read IYR, RWL, and RG. E238 contributes to the Mn(2+) binding site. D294 (proton donor) is an active-site residue.

The protein belongs to the UbiD family. As to quaternary structure, homohexamer. Requires prenylated FMN as cofactor. Mn(2+) is required as a cofactor.

Its subcellular location is the cell membrane. It carries out the reaction a 4-hydroxy-3-(all-trans-polyprenyl)benzoate + H(+) = a 2-(all-trans-polyprenyl)phenol + CO2. It functions in the pathway cofactor biosynthesis; ubiquinone biosynthesis. Functionally, catalyzes the decarboxylation of 3-octaprenyl-4-hydroxy benzoate to 2-octaprenylphenol, an intermediate step in ubiquinone biosynthesis. The protein is 3-octaprenyl-4-hydroxybenzoate carboxy-lyase of Albidiferax ferrireducens (strain ATCC BAA-621 / DSM 15236 / T118) (Rhodoferax ferrireducens).